A 350-amino-acid polypeptide reads, in one-letter code: Histidinol-phosphate aminotransferase (350 aa).

K212 carries the post-translational modification N6-(pyridoxal phosphate)lysine.

This sequence belongs to the class-II pyridoxal-phosphate-dependent aminotransferase family. Histidinol-phosphate aminotransferase subfamily. In terms of assembly, homodimer. It depends on pyridoxal 5'-phosphate as a cofactor.

The enzyme catalyses L-histidinol phosphate + 2-oxoglutarate = 3-(imidazol-4-yl)-2-oxopropyl phosphate + L-glutamate. It participates in amino-acid biosynthesis; L-histidine biosynthesis; L-histidine from 5-phospho-alpha-D-ribose 1-diphosphate: step 7/9. The chain is Histidinol-phosphate aminotransferase from Geobacter sulfurreducens (strain ATCC 51573 / DSM 12127 / PCA).